The primary structure comprises 279 residues: Tryptophan 2,3-dioxygenase (279 aa).

Residues 48–52, Tyr110, and Arg114 each bind substrate; that span reads FIIQH. His237 is a heme binding site. Thr251 lines the substrate pocket.

It belongs to the tryptophan 2,3-dioxygenase family. In terms of assembly, homotetramer. Heme serves as cofactor.

It carries out the reaction L-tryptophan + O2 = N-formyl-L-kynurenine. Its pathway is amino-acid degradation; L-tryptophan degradation via kynurenine pathway; L-kynurenine from L-tryptophan: step 1/2. Heme-dependent dioxygenase that catalyzes the oxidative cleavage of the L-tryptophan (L-Trp) pyrrole ring and converts L-tryptophan to N-formyl-L-kynurenine. Catalyzes the oxidative cleavage of the indole moiety. This chain is Tryptophan 2,3-dioxygenase, found in Bradyrhizobium diazoefficiens (strain JCM 10833 / BCRC 13528 / IAM 13628 / NBRC 14792 / USDA 110).